The sequence spans 179 residues: Gamma-crystallin S (179 aa).

S2 carries the N-acetylserine modification. An N-terminal arm region spans residues 2–5 (SKTG). Beta/gamma crystallin 'Greek key' domains are found at residues 6-44 (TKITFYEDKNFQGRRYDCDCDCSDFHTYLSRCNSIRVEG) and 45-87 (GTWA…RALH). The tract at residues 88-93 (LSSGGQ) is connecting peptide. Beta/gamma crystallin 'Greek key' domains follow at residues 94-134 (YKIQ…KVLD) and 135-177 (GAWI…RRIV).

This sequence belongs to the beta/gamma-crystallin family. In terms of assembly, monomer.

Functionally, crystallins are the dominant structural components of the vertebrate eye lens. The protein is Gamma-crystallin S (CRYGS) of Oryctolagus cuniculus (Rabbit).